Consider the following 134-residue polypeptide: Small ribosomal subunit protein uS11 (134 aa).

Belongs to the universal ribosomal protein uS11 family. In terms of assembly, part of the 30S ribosomal subunit. Interacts with proteins S7 and S18. Binds to IF-3.

Located on the platform of the 30S subunit, it bridges several disparate RNA helices of the 16S rRNA. Forms part of the Shine-Dalgarno cleft in the 70S ribosome. The chain is Small ribosomal subunit protein uS11 from Frankia casuarinae (strain DSM 45818 / CECT 9043 / HFP020203 / CcI3).